A 276-amino-acid polypeptide reads, in one-letter code: MPTSLKDTVKLHNGVEMPWFGLGVFKVENGNEATESVKAAIKNGYRSIDTAAIYKNEEGVGIGIKESGVAREELFITSKVWNEDQGYETTLAAFEKSLERLQLDYLDLYLIHWPGKDKYKDTWRALEKLYKDGKIRAIGVSNFQVHHLEELLKDAEIKPMVNQVEFHPRLTQKELRDYCKGQGIQLEAWSPLMQGQLLDNEVLTQIAEKHNKSVAQVILRWDLQHGVVTIPKSIKEHRIIENADIFDFELSQEDMDKIDALNKDERVGPNPDELLF.

Residue tyrosine 54 is the Proton donor of the active site. Histidine 112 serves as a coordination point for substrate. Residue 190 to 242 (SPLMQGQLLDNEVLTQIAEKHNKSVAQVILRWDLQHGVVTIPKSIKEHRIIEN) participates in NADP(+) binding.

This sequence belongs to the aldo/keto reductase family.

It catalyses the reaction (S)-lactaldehyde + NADP(+) = methylglyoxal + NADPH + H(+). Its function is as follows. Reduces glyoxal and methylglyoxal (2-oxopropanal). Is not involved in the vitamin B6 biosynthesis. The sequence is that of Glyoxal reductase (yvgN) from Bacillus subtilis (strain 168).